A 104-amino-acid polypeptide reads, in one-letter code: Large ribosomal subunit protein uL23 (104 aa).

This sequence belongs to the universal ribosomal protein uL23 family. As to quaternary structure, part of the 50S ribosomal subunit. Contacts protein L29, and trigger factor when it is bound to the ribosome.

Its function is as follows. One of the early assembly proteins it binds 23S rRNA. One of the proteins that surrounds the polypeptide exit tunnel on the outside of the ribosome. Forms the main docking site for trigger factor binding to the ribosome. The chain is Large ribosomal subunit protein uL23 from Paraburkholderia phytofirmans (strain DSM 17436 / LMG 22146 / PsJN) (Burkholderia phytofirmans).